The primary structure comprises 39 residues: MDRNQNPNRQPVELNRTSLYLGLLLIAVLGILFSSYFFN.

A helical membrane pass occupies residues 18-38 (SLYLGLLLIAVLGILFSSYFF).

It belongs to the PsbL family. As to quaternary structure, PSII is composed of 1 copy each of membrane proteins PsbA, PsbB, PsbC, PsbD, PsbE, PsbF, PsbH, PsbI, PsbJ, PsbK, PsbL, PsbM, PsbT, PsbX, PsbY, PsbZ, Psb30/Ycf12, peripheral proteins PsbO, CyanoQ (PsbQ), PsbU, PsbV and a large number of cofactors. It forms dimeric complexes.

It is found in the cellular thylakoid membrane. One of the components of the core complex of photosystem II (PSII). PSII is a light-driven water:plastoquinone oxidoreductase that uses light energy to abstract electrons from H(2)O, generating O(2) and a proton gradient subsequently used for ATP formation. It consists of a core antenna complex that captures photons, and an electron transfer chain that converts photonic excitation into a charge separation. This subunit is found at the monomer-monomer interface and is required for correct PSII assembly and/or dimerization. The protein is Photosystem II reaction center protein L of Crocosphaera subtropica (strain ATCC 51142 / BH68) (Cyanothece sp. (strain ATCC 51142)).